Reading from the N-terminus, the 93-residue chain is Pyrimidine/purine nucleoside phosphorylase (93 aa).

This sequence belongs to the nucleoside phosphorylase PpnP family.

The catalysed reaction is a purine D-ribonucleoside + phosphate = a purine nucleobase + alpha-D-ribose 1-phosphate. It carries out the reaction adenosine + phosphate = alpha-D-ribose 1-phosphate + adenine. The enzyme catalyses cytidine + phosphate = cytosine + alpha-D-ribose 1-phosphate. It catalyses the reaction guanosine + phosphate = alpha-D-ribose 1-phosphate + guanine. The catalysed reaction is inosine + phosphate = alpha-D-ribose 1-phosphate + hypoxanthine. It carries out the reaction thymidine + phosphate = 2-deoxy-alpha-D-ribose 1-phosphate + thymine. The enzyme catalyses uridine + phosphate = alpha-D-ribose 1-phosphate + uracil. It catalyses the reaction xanthosine + phosphate = alpha-D-ribose 1-phosphate + xanthine. Its function is as follows. Catalyzes the phosphorolysis of diverse nucleosides, yielding D-ribose 1-phosphate and the respective free bases. Can use uridine, adenosine, guanosine, cytidine, thymidine, inosine and xanthosine as substrates. Also catalyzes the reverse reactions. In Pseudomonas paraeruginosa (strain DSM 24068 / PA7) (Pseudomonas aeruginosa (strain PA7)), this protein is Pyrimidine/purine nucleoside phosphorylase.